The primary structure comprises 437 residues: Arginine biosynthesis bifunctional protein ArgJ, mitochondrial (437 aa).

Substrate contacts are provided by Thr173, Lys200, Thr211, Glu297, Asn432, and Ser437. The active-site Nucleophile is Thr211.

This sequence belongs to the ArgJ family. Heterodimer of an alpha and a beta chain. In terms of processing, the alpha and beta chains are autoproteolytically processed from a single precursor protein within the mitochondrion.

Its subcellular location is the mitochondrion matrix. It catalyses the reaction N(2)-acetyl-L-ornithine + L-glutamate = N-acetyl-L-glutamate + L-ornithine. It carries out the reaction L-glutamate + acetyl-CoA = N-acetyl-L-glutamate + CoA + H(+). It participates in amino-acid biosynthesis; L-arginine biosynthesis; L-ornithine and N-acetyl-L-glutamate from L-glutamate and N(2)-acetyl-L-ornithine (cyclic): step 1/1. Its pathway is amino-acid biosynthesis; L-arginine biosynthesis; N(2)-acetyl-L-ornithine from L-glutamate: step 1/4. Functionally, catalyzes two activities which are involved in the cyclic version of arginine biosynthesis: the synthesis of acetylglutamate from glutamate and acetyl-CoA, and of ornithine by transacetylation between acetylornithine and glutamate. This Zygosaccharomyces rouxii (strain ATCC 2623 / CBS 732 / NBRC 1130 / NCYC 568 / NRRL Y-229) protein is Arginine biosynthesis bifunctional protein ArgJ, mitochondrial.